A 185-amino-acid chain; its full sequence is Large ribosomal subunit protein uL5 (185 aa).

Belongs to the universal ribosomal protein uL5 family. Part of the 50S ribosomal subunit; part of the 5S rRNA/L5/L18/L25 subcomplex. Contacts the 5S rRNA and the P site tRNA. Forms a bridge to the 30S subunit in the 70S ribosome.

Its function is as follows. This is one of the proteins that bind and probably mediate the attachment of the 5S RNA into the large ribosomal subunit, where it forms part of the central protuberance. In the 70S ribosome it contacts protein S13 of the 30S subunit (bridge B1b), connecting the 2 subunits; this bridge is implicated in subunit movement. Contacts the P site tRNA; the 5S rRNA and some of its associated proteins might help stabilize positioning of ribosome-bound tRNAs. The polypeptide is Large ribosomal subunit protein uL5 (Bradyrhizobium diazoefficiens (strain JCM 10833 / BCRC 13528 / IAM 13628 / NBRC 14792 / USDA 110)).